Reading from the N-terminus, the 254-residue chain is 3-deoxy-manno-octulosonate cytidylyltransferase (254 aa).

The protein belongs to the KdsB family.

It localises to the cytoplasm. It carries out the reaction 3-deoxy-alpha-D-manno-oct-2-ulosonate + CTP = CMP-3-deoxy-beta-D-manno-octulosonate + diphosphate. The protein operates within nucleotide-sugar biosynthesis; CMP-3-deoxy-D-manno-octulosonate biosynthesis; CMP-3-deoxy-D-manno-octulosonate from 3-deoxy-D-manno-octulosonate and CTP: step 1/1. It participates in bacterial outer membrane biogenesis; lipopolysaccharide biosynthesis. In terms of biological role, activates KDO (a required 8-carbon sugar) for incorporation into bacterial lipopolysaccharide in Gram-negative bacteria. In Pseudoalteromonas atlantica (strain T6c / ATCC BAA-1087), this protein is 3-deoxy-manno-octulosonate cytidylyltransferase.